The primary structure comprises 235 residues: (5-formylfuran-3-yl)methyl phosphate synthase (235 aa).

The active-site Schiff-base intermediate with substrate is Lys-27. Catalysis depends on Lys-85, which acts as the Proton acceptor.

The protein belongs to the MfnB family.

It catalyses the reaction 2 D-glyceraldehyde 3-phosphate = 4-(hydroxymethyl)-2-furancarboxaldehyde phosphate + phosphate + 2 H2O. The protein operates within cofactor biosynthesis; methanofuran biosynthesis. In terms of biological role, catalyzes the formation of 4-(hydroxymethyl)-2-furancarboxaldehyde phosphate (4-HFC-P) from two molecules of glyceraldehyde-3-P (GA-3-P). This Methanococcus aeolicus (strain ATCC BAA-1280 / DSM 17508 / OCM 812 / Nankai-3) protein is (5-formylfuran-3-yl)methyl phosphate synthase.